An 80-amino-acid chain; its full sequence is Adipogenin (80 aa).

The chain crosses the membrane as a helical span at residues 14–34 (FSFLVFWFCLPVGLLLLLIIW).

The protein belongs to the adipogenin family.

The protein localises to the membrane. The protein resides in the nucleus. Plays a role in stimulating adipocyte differentiation and development. In Homo sapiens (Human), this protein is Adipogenin.